Reading from the N-terminus, the 589-residue chain is Lipoprotein LpqB (589 aa).

An N-terminal signal peptide occupies residues 1–20 (MMRGVLVIMRLLCLGMLFTG). The N-palmitoyl cysteine moiety is linked to residue C21. C21 carries S-diacylglycerol cysteine lipidation.

This sequence belongs to the LpqB lipoprotein family.

It is found in the cell membrane. The protein is Lipoprotein LpqB of Mycobacterium leprae (strain TN).